The chain runs to 120 residues: Large ribosomal subunit protein bL20 (120 aa).

This sequence belongs to the bacterial ribosomal protein bL20 family.

Its function is as follows. Binds directly to 23S ribosomal RNA and is necessary for the in vitro assembly process of the 50S ribosomal subunit. It is not involved in the protein synthesizing functions of that subunit. The polypeptide is Large ribosomal subunit protein bL20 (Novosphingobium aromaticivorans (strain ATCC 700278 / DSM 12444 / CCUG 56034 / CIP 105152 / NBRC 16084 / F199)).